A 365-amino-acid chain; its full sequence is Pyruvate dehydrogenase E1 component subunit beta, mitochondrial (365 aa).

The N-terminal 24 residues, 1-24, are a transit peptide targeting the mitochondrion; sequence MLRTRLIQAASSAQRAFSTSQKAL. Glutamate 85 contacts thiamine diphosphate. K(+)-binding residues include isoleucine 138, alanine 186, isoleucine 187, and aspartate 189.

Thiamine diphosphate serves as cofactor. Expressed in salivary glands (at protein level).

The protein resides in the mitochondrion matrix. The enzyme catalyses N(6)-[(R)-lipoyl]-L-lysyl-[protein] + pyruvate + H(+) = N(6)-[(R)-S(8)-acetyldihydrolipoyl]-L-lysyl-[protein] + CO2. Functionally, the pyruvate dehydrogenase complex catalyzes the overall conversion of pyruvate to acetyl-CoA and CO(2). Might play a role in regulating synapse structure formation at neuromuscular junctions. Might play a role in maintenance of mitochondrial morphology. The chain is Pyruvate dehydrogenase E1 component subunit beta, mitochondrial from Drosophila melanogaster (Fruit fly).